The primary structure comprises 156 residues: Small ribosomal subunit protein uS7 (156 aa).

The protein belongs to the universal ribosomal protein uS7 family. Part of the 30S ribosomal subunit. Contacts proteins S9 and S11.

One of the primary rRNA binding proteins, it binds directly to 16S rRNA where it nucleates assembly of the head domain of the 30S subunit. Is located at the subunit interface close to the decoding center, probably blocks exit of the E-site tRNA. The chain is Small ribosomal subunit protein uS7 from Anaeromyxobacter dehalogenans (strain 2CP-C).